The chain runs to 1187 residues: Protein CHROMATIN REMODELING 8 (1187 aa).

The interval 1–55 is disordered; that stretch reads MEEDEDQFLLSSLGVTSANPEDLEQKILDEATKKPDNDEGGSVEEKSTQLEGTNL. The span at 9–19 shows a compositional bias: polar residues; the sequence is LLSSLGVTSAN. Residues 23 to 48 are compositionally biased toward basic and acidic residues; the sequence is LEQKILDEATKKPDNDEGGSVEEKST. A coiled-coil region spans residues 110 to 170; it reads LQHALATDRL…LKRKLKEIRK (61 aa). Residues 162–169 carry the Nuclear localization signal 1 motif; the sequence is KRKLKEIR. Disordered regions lie at residues 223–247 and 273–343; these read GFER…DENE and DAED…DGRR. 2 short sequence motifs (nuclear localization signal) span residues 290–297 and 310–317; these read LRKLYKTP and GKKSKKTR. Residues 305 to 328 show a composition bias toward basic residues; sequence KKRKAGKKSKKTRPLPEKKWRKRI. The Helicase ATP-binding domain maps to 397–594; that stretch reads WELHCQRAGG…WSLFDFVFPG (198 aa). 410–417 contributes to the ATP binding site; the sequence is DEMGLGKT. Residues 467–501 are disordered; the sequence is SAQDSGHGKGQGKASESDYDSESSVDSDHEPKSKN. Residues 492-501 are compositionally biased toward basic and acidic residues; the sequence is DSDHEPKSKN. The DEGH box signature appears at 545–548; sequence DEGH. Residues 730–890 enclose the Helicase C-terminal domain; sequence KVVAEVLKVW…RRFFKARDMK (161 aa). Positions 987–1016 form a coiled coil; that stretch reads NANDEEEKMRLEHQASQVAQRAAEALRQSR. Residues 1050–1059 show a composition bias toward polar residues; it reads VNSRLTQTGD. Residues 1050–1075 are disordered; it reads VNSRLTQTGDKPSAIKNGISAGLSSG.

The protein belongs to the SNF2/RAD54 helicase family. Homodimer. Binds DNA.

Its subcellular location is the nucleus. Its function is as follows. Essential factor involved in transcription-coupled nucleotide excision repair (TCR) which allows RNA polymerase II-blocking lesions to be rapidly removed from the transcribed strand of active genes. Upon DNA-binding, it locally modifies DNA conformation by wrapping the DNA around itself, thereby modifying the interface between stalled RNA polymerase II and DNA. It is required for transcription-coupled repair complex formation. This chain is Protein CHROMATIN REMODELING 8, found in Arabidopsis thaliana (Mouse-ear cress).